We begin with the raw amino-acid sequence, 314 residues long: Putative methylthioribose-1-phosphate isomerase (314 aa).

Residues 45 to 47 (RGA), Arg79, and Gln177 contribute to the substrate site. Asp218 acts as the Proton donor in catalysis. 227-228 (NK) contacts substrate.

This sequence belongs to the eIF-2B alpha/beta/delta subunits family. MtnA subfamily.

It carries out the reaction 5-(methylsulfanyl)-alpha-D-ribose 1-phosphate = 5-(methylsulfanyl)-D-ribulose 1-phosphate. Its function is as follows. Catalyzes the interconversion of methylthioribose-1-phosphate (MTR-1-P) into methylthioribulose-1-phosphate (MTRu-1-P). This chain is Putative methylthioribose-1-phosphate isomerase, found in Methanosphaera stadtmanae (strain ATCC 43021 / DSM 3091 / JCM 11832 / MCB-3).